Here is a 176-residue protein sequence, read N- to C-terminus: Interleukin-20 (176 aa).

An N-terminal signal peptide occupies residues 1–24; it reads MKGFGLAFGLFSAVGFLLWTPLTG. Cystine bridges form between cysteine 33–cysteine 126, cysteine 80–cysteine 132, and cysteine 81–cysteine 134.

It belongs to the IL-10 family. As to quaternary structure, forms a 1:1:1 heterotrimeric complex with its primary high-affinity heterodimeric receptor IL20RA/IL20RB.

It localises to the secreted. In terms of biological role, pro-inflammatory and angiogenic cytokine mainly secreted by monocytes and skin keratinocytes that plays crucial roles in immune responses, regulation of inflammatory responses, hemopoiesis, as well as epidermal cell and keratinocyte differentiation. Enhances tissue remodeling and wound-healing activities and restores the homeostasis of epithelial layers during infection and inflammatory responses to maintain tissue integrity. Affects multiple actin-mediated functions in activated neutrophils leading to inhibition of phagocytosis, granule exocytosis, and migration. Exert its effects via the type I IL-20 receptor complex consisting of IL20RA and IL20RB. Alternatively, can mediate its activity through a second receptor complex called type II IL-20 receptor complex composed of IL22RA1 and IL20RB. Acts as an arteriogenic and vascular remodeling factory by activating a range of signaling processes including phosphorylations of JAK2 and STAT5 as well as activation of the serine and threonine kinases AKT and ERK1/2. Alternatively, can activate STAT3 phosphorylation and transcriptional activity in a JAK2, ERK1/2 and p38 MAPK-dependent manner in keratinocytes. In Mus musculus (Mouse), this protein is Interleukin-20 (Il20).